A 127-amino-acid chain; its full sequence is Large ribosomal subunit protein bL12 (127 aa).

It belongs to the bacterial ribosomal protein bL12 family. In terms of assembly, homodimer. Part of the ribosomal stalk of the 50S ribosomal subunit. Forms a multimeric L10(L12)X complex, where L10 forms an elongated spine to which 2 to 4 L12 dimers bind in a sequential fashion. Binds GTP-bound translation factors.

Its function is as follows. Forms part of the ribosomal stalk which helps the ribosome interact with GTP-bound translation factors. Is thus essential for accurate translation. This Carboxydothermus hydrogenoformans (strain ATCC BAA-161 / DSM 6008 / Z-2901) protein is Large ribosomal subunit protein bL12.